A 500-amino-acid polypeptide reads, in one-letter code: NAD(P)H-quinone oxidoreductase chain 4, chloroplastic (500 aa).

The next 14 membrane-spanning stretches (helical) occupy residues 4–24 (FPWLTLIVVLPISAGSLIFFL), 37–57 (IFICMLELLLTTYVFCYHFQL), 87–107 (IGPILLTGFITTLATLAAWPV), 113–130 (LFHFLMLAMYSGQIGSFS), 134–154 (LLLFFIMWELELIPVYLLLSM), 167–187 (FILYTAGGSIFLLLGVLGIGL), 208–228 (ALEIIFYIGFFIAFAVKSPII), 242–262 (HYSTCMLLAGILLKMGAYGLV), 272–292 (AHSIFSPWLVVVGTMQIIYAA), 305–325 (IAYSSVSHMGFIIIGIGSITD), 330–350 (GAILQIISHGFLGAALFFLAG), 386–406 (LALPGMSGFVAELIVFFGIIT), 416–436 (ILITFVMAIGMILTPIYSLSM), and 462–482 (LFVLISIFLPVIGIGIYPDFV).

This sequence belongs to the complex I subunit 4 family.

Its subcellular location is the plastid. It localises to the chloroplast thylakoid membrane. It carries out the reaction a plastoquinone + NADH + (n+1) H(+)(in) = a plastoquinol + NAD(+) + n H(+)(out). It catalyses the reaction a plastoquinone + NADPH + (n+1) H(+)(in) = a plastoquinol + NADP(+) + n H(+)(out). This Vitis vinifera (Grape) protein is NAD(P)H-quinone oxidoreductase chain 4, chloroplastic.